A 248-amino-acid polypeptide reads, in one-letter code: Protein PIMREG (248 aa).

A compositionally biased stretch (polar residues) spans 1 to 10; sequence MASRWQNMGT. The tract at residues 1–32 is disordered; sequence MASRWQNMGTSVRRRSLQHQEQLEDSKELQPV. Residues Ser-11 and Ser-16 each carry the phosphoserine modification. Short sequence motifs (D-box) lie at residues 14–17 and 53–56; these read RRSL and RLPL. Residues 117 to 205 form a disordered region; the sequence is KARRRKRGAQ…PSESDSDLEP (89 aa). Residue Ser-129 is modified to Phosphoserine. Ser-131 is subject to Phosphoserine; by UHMK1; in vitro. Composition is skewed to polar residues over residues 132–143 and 186–198; these read PTHSLSQKSTRL and PYSS…SPSE. Phosphoserine is present on residues Ser-199 and Ser-201.

In terms of assembly, isoform 1 and isoform 2 interact with PICALM; this interaction may target PICALM to the nucleus. During mitosis, associates with HDAC2 and MTA2 subunits of the chromatin-remodeling NuRD complex; this association is strongest at prometaphase and decreases as the cell progresses through metaphase and anaphase. Ubiquitinated by the anaphase-promoting complex/cyclosome (APC/C) complex in the presence of FZR1, leading to its degradation by the proteasome during mitotic exit. However, degradation is not essential for normal mitotic progression within a single cell cycle. In terms of tissue distribution, expressed in thymus (at protein level). Detected in spleen, colon, ovary and small intestines.

It localises to the nucleus. Its subcellular location is the nucleolus. During mitosis, may play a role in the control of metaphase-to-anaphase transition. The polypeptide is Protein PIMREG (Homo sapiens (Human)).